A 434-amino-acid polypeptide reads, in one-letter code: Ribosomal protein uS12 methylthiotransferase RimO (434 aa).

The 119-residue stretch at 4–122 (NRVDVITLGC…LISHLGKSYY (119 aa)) folds into the MTTase N-terminal domain. [4Fe-4S] cluster is bound by residues cysteine 13, cysteine 51, cysteine 85, cysteine 146, cysteine 150, and cysteine 153. The Radical SAM core domain occupies 132-363 (TTPRHYAYLK…MAVQERISAA (232 aa)). Residues 366–434 (EAKIGSRLRV…PFDLYARIVD (69 aa)) form the TRAM domain.

This sequence belongs to the methylthiotransferase family. RimO subfamily. It depends on [4Fe-4S] cluster as a cofactor.

The protein resides in the cytoplasm. It catalyses the reaction L-aspartate(89)-[ribosomal protein uS12]-hydrogen + (sulfur carrier)-SH + AH2 + 2 S-adenosyl-L-methionine = 3-methylsulfanyl-L-aspartate(89)-[ribosomal protein uS12]-hydrogen + (sulfur carrier)-H + 5'-deoxyadenosine + L-methionine + A + S-adenosyl-L-homocysteine + 2 H(+). Catalyzes the methylthiolation of an aspartic acid residue of ribosomal protein uS12. The sequence is that of Ribosomal protein uS12 methylthiotransferase RimO from Porphyromonas gingivalis (strain ATCC 33277 / DSM 20709 / CIP 103683 / JCM 12257 / NCTC 11834 / 2561).